Here is a 635-residue protein sequence, read N- to C-terminus: ADP-ribosylation factor-binding protein GGA1 (635 aa).

The residue at position 1 (methionine 1) is an N-acetylmethionine. Residues 17 to 147 (ATNPLNKELN…MLKKQGIVKS (131 aa)) enclose the VHS domain. The interaction with ARF3 stretch occupies residues 114–273 (KILELLYSWT…RLASDTEDND (160 aa)). The GAT domain occupies 171–298 (DEEKSKMLAR…VINLYKQLVR (128 aa)). Residue serine 185 is modified to Phosphoserine. The tract at residues 299–505 (GEEVNGDATA…ITVPLESIKP (207 aa)) is unstructured hinge. The disordered stretch occupies residues 305-349 (DATASSIPGSTSALLDLSGLDLPPPGTTQPATPTRPGNQSSPEQL). Residues 313–325 (GSTSALLDLSGLD) are compositionally biased toward low complexity. Phosphoserine is present on serine 354. An Autoinhibitory motif is present at residues 357–361 (DDELM). 2 disordered regions span residues 362–422 (SLGL…LDDL) and 455–490 (RDLQ…TPTE). Positions 383–393 (NFQSSDGTESS) are enriched in polar residues. Serine 417 bears the Phosphoserine mark. Over residues 459–476 (SKSSSPSPGAASLLHTTS) the composition is skewed to low complexity. The segment covering 477-486 (PEPPGPPPQA) has biased composition (pro residues). The region spanning 506-627 (SSILPVTVYD…NEMGDVDQFP (122 aa)) is the GAE domain.

This sequence belongs to the GGA protein family. In terms of assembly, monomer. Interacts with GGA2 and GGA3. Binds to clathrin and activated ARFs, including ARF1, ARF5 and ARF6. Interacts with RABEP1 and RABGEF1. Interacts with the type-I membrane proteins LRP3, M6PR/CD-MPR and IGF2R/CI-MPR. Interacts (via N-terminal VHS domain) with SORL1/sorLA and SORT1 (via C-terminal cytosolic domain). Interacts with EPN4. Interacts with CCDC91. Interacts with HEATR5B/p200a. Interacts with SYNRG/gamma-synergin. Interacts (via GAE doamin) with NECAP1 and NECAP2. Interacts (via GAE domain) with AFTPH/aftiphilin. Interacts with TSG101 and UBC. Interacts with RNF11. Interacts (via VHS domain) with BACE1 (via DXXLL motif); the interaction highly increases when BACE1 is phosphorylated at 'Ser-498'. Interacts with CNST. Interacts with ADRA2B. Interacts with ARL3; the interaction recruits, in collaboration with RABEP1, PKD1:PKD2 complex to trans-Golgi network and is required for ciliary targeting. Post-translationally, phosphorylated by CK2 and dephosphorylated by PP2A. Phosphorylation of GGA1 allows the internal DXXLL motif to bind the VHS domain and to inhibit the recognition of cargo signals. In terms of processing, ubiquitinated.

Its subcellular location is the golgi apparatus. It is found in the trans-Golgi network membrane. The protein localises to the endosome membrane. The protein resides in the early endosome membrane. Functionally, plays a role in protein sorting and trafficking between the trans-Golgi network (TGN) and endosomes. Mediates the ARF-dependent recruitment of clathrin to the TGN and binds ubiquitinated proteins and membrane cargo molecules with a cytosolic acidic cluster-dileucine (DXXLL) motif. Mediates export of the GPCR receptor ADRA2B to the cell surface. Required for targeting PKD1:PKD2 complex from the trans-Golgi network to the cilium membrane. Regulates retrograde transport of proteins such as phosphorylated form of BACE1 from endosomes to the trans-Golgi network. This chain is ADP-ribosylation factor-binding protein GGA1 (Gga1), found in Mus musculus (Mouse).